Consider the following 353-residue polypeptide: Divinyl chlorophyll a/b light-harvesting protein PcbG (353 aa).

The next 6 helical transmembrane spans lie at 28–48 (FISS…ANTL), 64–84 (GLVV…NGVF), 90–110 (LLVV…GGML), 204–224 (IMGG…FHIL), 244–264 (FVLS…ALWC), and 308–328 (LTNV…FHGL).

Belongs to the PsbB/PsbC family. IsiA/Pcb subfamily. The antenna complex consists of divinyl chlorophylls (a and b) and divinyl chlorophyll a/b binding proteins and binds more divinyl chlorophyll b than does the antenna complex from high-light-adapted Prochlorococcus. Also forms complexes with PSI, consisting of a PSI trimer with surrounded by a PcbG ring (probably with 18 subunits). Is the only subunit found in this ring under iron-replete conditions. The cofactor is divinyl chlorophyll a. Divinyl chlorophyll b serves as cofactor.

The protein resides in the cellular thylakoid membrane. Functionally, the antenna complex functions as a light receptor, it captures and delivers excitation energy to photosystems I. The Prochlorales pcb genes are not related to higher plant LHCs. This chain is Divinyl chlorophyll a/b light-harvesting protein PcbG (pcbG), found in Prochlorococcus marinus (strain SARG / CCMP1375 / SS120).